The chain runs to 238 residues: Small ribosomal subunit protein uS2 (238 aa).

The protein belongs to the universal ribosomal protein uS2 family.

The protein is Small ribosomal subunit protein uS2 of Chloroflexus aggregans (strain MD-66 / DSM 9485).